A 347-amino-acid polypeptide reads, in one-letter code: NADH-ubiquinone oxidoreductase chain 2 (347 aa).

Helical transmembrane passes span 1–21, 25–45, 59–79, 96–116, 122–142, 145–165, 178–198, 200–220, 242–262, 274–294, and 325–345; these read MNPL…SIIL, HWFM…PVLM, YFLT…INLM, LLIT…FWVP, VSLQ…LAVM, IFAS…IMIG, IMAY…IYNP, LMLL…MMFM, VLMM…GFMP, NSVI…FFYM, and LLAP…MFIL.

It belongs to the complex I subunit 2 family. In terms of assembly, core subunit of respiratory chain NADH dehydrogenase (Complex I) which is composed of 45 different subunits. Interacts with TMEM242.

The protein resides in the mitochondrion inner membrane. It carries out the reaction a ubiquinone + NADH + 5 H(+)(in) = a ubiquinol + NAD(+) + 4 H(+)(out). Its function is as follows. Core subunit of the mitochondrial membrane respiratory chain NADH dehydrogenase (Complex I) which catalyzes electron transfer from NADH through the respiratory chain, using ubiquinone as an electron acceptor. Essential for the catalytic activity and assembly of complex I. In Myosorex kihaulei (Kihaule's mouse shrew), this protein is NADH-ubiquinone oxidoreductase chain 2.